The chain runs to 191 residues: Protein GrpE (191 aa).

Residues 1–21 (MSDKKKNAEEFEETFSDKTSE) are compositionally biased toward basic and acidic residues. The disordered stretch occupies residues 1–39 (MSDKKKNAEEFEETFSDKTSEDESTVENETVEENENEDV). The span at 22 to 38 (DESTVENETVEENENED) shows a compositional bias: acidic residues.

The protein belongs to the GrpE family. As to quaternary structure, homodimer.

It is found in the cytoplasm. Functionally, participates actively in the response to hyperosmotic and heat shock by preventing the aggregation of stress-denatured proteins, in association with DnaK and GrpE. It is the nucleotide exchange factor for DnaK and may function as a thermosensor. Unfolded proteins bind initially to DnaJ; upon interaction with the DnaJ-bound protein, DnaK hydrolyzes its bound ATP, resulting in the formation of a stable complex. GrpE releases ADP from DnaK; ATP binding to DnaK triggers the release of the substrate protein, thus completing the reaction cycle. Several rounds of ATP-dependent interactions between DnaJ, DnaK and GrpE are required for fully efficient folding. The chain is Protein GrpE from Tetragenococcus halophilus (Pediococcus halophilus).